The chain runs to 77 residues: Acyl carrier protein (77 aa).

Positions 2 to 77 (SNIEERVRNI…SAIDYVVNNG (76 aa)) constitute a Carrier domain. Position 37 is an O-(pantetheine 4'-phosphoryl)serine (S37).

It belongs to the acyl carrier protein (ACP) family. In terms of processing, 4'-phosphopantetheine is transferred from CoA to a specific serine of apo-ACP by AcpS. This modification is essential for activity because fatty acids are bound in thioester linkage to the sulfhydryl of the prosthetic group.

It is found in the cytoplasm. Its pathway is lipid metabolism; fatty acid biosynthesis. Its function is as follows. Carrier of the growing fatty acid chain in fatty acid biosynthesis. The polypeptide is Acyl carrier protein (Psychromonas ingrahamii (strain DSM 17664 / CCUG 51855 / 37)).